A 136-amino-acid chain; its full sequence is Polyadenylate-binding protein-interacting protein 2B (136 aa).

A compositionally biased stretch (polar residues) spans 15–25 (NGSSVASTSPS). 2 disordered regions span residues 15–40 (NGSS…HEEK) and 107–136 (SVGD…GVKY). Residues 27-40 (KCKEDQGLNGHEEK) are compositionally biased toward basic and acidic residues.

The protein belongs to the PAIP2 family. Interacts (via central acidic portion and C-terminus) with PABPC1 (via the second and third RRM domains and the C-terminus). In terms of processing, ubiquitinated in vitro. Expressed at very high levels in pancreas, at high levels in testis and at moderately high levels in brain, heart and lung (at protein level).

Functionally, inhibits translation of capped and polyadenylated mRNAs by displacing PABPC1 from the poly(A) tail. This is Polyadenylate-binding protein-interacting protein 2B (Paip2b) from Mus musculus (Mouse).